The primary structure comprises 728 residues: Leucine-rich repeat and calponin homology domain-containing protein 1 (728 aa).

The segment covering 24-36 (HHPHHHHHHHQHH) has biased composition (basic residues). The segment at 24–57 (HHPHHHHHHHQHHGGTGAPGGAGGGGGGSGGFNL) is disordered. Positions 37–54 (GGTGAPGGAGGGGGGSGG) are enriched in gly residues. LRR repeat units follow at residues 98 to 119 (DTVQADLSKNRLVEVPMELCHF), 121 to 143 (SLEILNLYHNCIRVIPEAIVNLQ), 144 to 166 (MLTYLNLSRNQLSALPACLCGLP), 167 to 187 (LKVLIASNNKLGSLPEEIGQL), 189 to 210 (QLMELDVSCNEITALPQQIGQL), 212 to 234 (SLRELNVRRNYLKVLPQELVDLS), 235 to 255 (LVKFDFSCNKVLVIPICFREM), 257 to 278 (QLQVLLLENNPLQSPPAQICTK), and 283 to 304 (IFKYLSIQACQIKTADSLYLHT). Positions 311–322 (HQHVEDGKKDSD) are enriched in basic and acidic residues. Residues 311–348 (HQHVEDGKKDSDSGVGSDNGDKRLSATEPSDEDTVSLN) are disordered. Position 370 is a phosphoserine (S370). Residues 377–398 (HQEFQPEPSLLGDSTNSGEERD) form a disordered region. S409 bears the Phosphoserine mark. A compositionally biased stretch (polar residues) spans 516–525 (LQSNGSQYSP). The interval 516–547 (LQSNGSQYSPNEIRENSPAVSPTTNSTAPFGL) is disordered. Phosphoserine is present on residues S532 and S536. Polar residues predominate over residues 533–543 (PAVSPTTNSTA). At T568 the chain carries Phosphothreonine. The Calponin-homology (CH) domain maps to 576–692 (MREEKELVEQ…TLLALGEKAP (117 aa)).

Interacts (via LRR repeats) with unphosphorylated DOCK8 (via DHR-2 domain); the interaction prevents the interaction between DOCK8 and CDC42.

It is found in the cytoplasm. In terms of biological role, acts as a negative regulator of GTPase CDC42 by sequestering CDC42-guanine exchange factor DOCK8. Probably by preventing CDC42 activation, negatively regulates CD4(+) T-cell migration. The chain is Leucine-rich repeat and calponin homology domain-containing protein 1 (LRCH1) from Homo sapiens (Human).